A 323-amino-acid polypeptide reads, in one-letter code: Lipoyl synthase (323 aa).

Positions 1–14 (MVTILDRTKPDDKR) are enriched in basic and acidic residues. The tract at residues 1–25 (MVTILDRTKPDDKRIRHPEKAHKPD) is disordered. Cys61, Cys66, Cys72, Cys87, Cys91, Cys94, and Ser300 together coordinate [4Fe-4S] cluster. Positions 73–289 (WEKKHATFMI…EDIAYTKGFL (217 aa)) constitute a Radical SAM core domain.

The protein belongs to the radical SAM superfamily. Lipoyl synthase family. It depends on [4Fe-4S] cluster as a cofactor.

Its subcellular location is the cytoplasm. It catalyses the reaction [[Fe-S] cluster scaffold protein carrying a second [4Fe-4S](2+) cluster] + N(6)-octanoyl-L-lysyl-[protein] + 2 oxidized [2Fe-2S]-[ferredoxin] + 2 S-adenosyl-L-methionine + 4 H(+) = [[Fe-S] cluster scaffold protein] + N(6)-[(R)-dihydrolipoyl]-L-lysyl-[protein] + 4 Fe(3+) + 2 hydrogen sulfide + 2 5'-deoxyadenosine + 2 L-methionine + 2 reduced [2Fe-2S]-[ferredoxin]. It functions in the pathway protein modification; protein lipoylation via endogenous pathway; protein N(6)-(lipoyl)lysine from octanoyl-[acyl-carrier-protein]: step 2/2. Catalyzes the radical-mediated insertion of two sulfur atoms into the C-6 and C-8 positions of the octanoyl moiety bound to the lipoyl domains of lipoate-dependent enzymes, thereby converting the octanoylated domains into lipoylated derivatives. The sequence is that of Lipoyl synthase from Allorhizobium ampelinum (strain ATCC BAA-846 / DSM 112012 / S4) (Agrobacterium vitis (strain S4)).